The sequence spans 550 residues: Chaperonin GroEL (550 aa).

Residues 30-33 (TLGP), Lys51, 87-91 (DGTTT), Gly416, 480-482 (NVA), and Asp496 contribute to the ATP site. Residues 525–550 (LPKKDDEGGGGDMGGMGGMGGMGGMM) form a disordered region. A compositionally biased stretch (gly residues) spans 534–550 (GGDMGGMGGMGGMGGMM).

It belongs to the chaperonin (HSP60) family. Forms a cylinder of 14 subunits composed of two heptameric rings stacked back-to-back. Interacts with the co-chaperonin GroES.

The protein localises to the cytoplasm. It catalyses the reaction ATP + H2O + a folded polypeptide = ADP + phosphate + an unfolded polypeptide.. Together with its co-chaperonin GroES, plays an essential role in assisting protein folding. The GroEL-GroES system forms a nano-cage that allows encapsulation of the non-native substrate proteins and provides a physical environment optimized to promote and accelerate protein folding. The polypeptide is Chaperonin GroEL (Halorhodospira halophila (strain DSM 244 / SL1) (Ectothiorhodospira halophila (strain DSM 244 / SL1))).